The chain runs to 677 residues: Methionine--tRNA ligase (677 aa).

Residues 15 to 25 carry the 'HIGH' region motif; sequence PYANGSIHLGH. Residues cysteine 146, cysteine 149, cysteine 159, and cysteine 162 each coordinate Zn(2+). Residues 333 to 337 carry the 'KMSKS' region motif; it reads KMSKS. Lysine 336 lines the ATP pocket. The 103-residue stretch at 575 to 677 folds into the tRNA-binding domain; that stretch reads DFAKVDLRVA…AGAKPGHQVK (103 aa).

This sequence belongs to the class-I aminoacyl-tRNA synthetase family. MetG type 1 subfamily. As to quaternary structure, homodimer. Requires Zn(2+) as cofactor.

It is found in the cytoplasm. The catalysed reaction is tRNA(Met) + L-methionine + ATP = L-methionyl-tRNA(Met) + AMP + diphosphate. Its function is as follows. Is required not only for elongation of protein synthesis but also for the initiation of all mRNA translation through initiator tRNA(fMet) aminoacylation. In Escherichia coli O157:H7, this protein is Methionine--tRNA ligase.